The primary structure comprises 757 residues: Cellulose synthase-like protein B1 (757 aa).

A run of 2 helical transmembrane segments spans residues 18 to 38 and 50 to 70; these read TNYF…SLLL and VWLV…LITC. Asp-136 is an active-site residue. Positions 186–216 form a coiled coil; it reads EFNRDWEKTKREYEKLRRKVEDATGDSHMLD. Asp-462 is an active-site residue. 6 helical membrane passes run 533–553, 569–589, 615–635, 674–694, 710–730, and 737–757; these read LAYL…YCLL, LYLG…LWEF, LFSI…VFII, FLPG…FSVG, AEAC…MGLF, and TPLS…VFSV.

It belongs to the glycosyltransferase 2 family. Plant cellulose synthase-like B subfamily. Expressed in young seedlings, primarily in the vascular tissue.

Its subcellular location is the golgi apparatus membrane. Its function is as follows. Thought to be a Golgi-localized beta-glycan synthase that polymerize the backbones of noncellulosic polysaccharides (hemicelluloses) of plant cell wall. This is Cellulose synthase-like protein B1 (CSLB1) from Arabidopsis thaliana (Mouse-ear cress).